The chain runs to 287 residues: Elongation factor Ts (287 aa).

The segment at 80 to 83 (TDFL) is involved in Mg(2+) ion dislocation from EF-Tu.

The protein belongs to the EF-Ts family.

Its subcellular location is the cytoplasm. In terms of biological role, associates with the EF-Tu.GDP complex and induces the exchange of GDP to GTP. It remains bound to the aminoacyl-tRNA.EF-Tu.GTP complex up to the GTP hydrolysis stage on the ribosome. This is Elongation factor Ts from Pseudomonas entomophila (strain L48).